The primary structure comprises 935 residues: 2-oxoglutarate dehydrogenase E1 component (935 aa).

It belongs to the alpha-ketoglutarate dehydrogenase family. As to quaternary structure, homodimer. Part of the 2-oxoglutarate dehydrogenase (OGDH) complex composed of E1 (2-oxoglutarate dehydrogenase), E2 (dihydrolipoamide succinyltransferase) and E3 (dihydrolipoamide dehydrogenase); the complex contains multiple copies of the three enzymatic components (E1, E2 and E3). Thiamine diphosphate serves as cofactor.

The catalysed reaction is N(6)-[(R)-lipoyl]-L-lysyl-[protein] + 2-oxoglutarate + H(+) = N(6)-[(R)-S(8)-succinyldihydrolipoyl]-L-lysyl-[protein] + CO2. E1 component of the 2-oxoglutarate dehydrogenase (OGDH) complex which catalyzes the decarboxylation of 2-oxoglutarate, the first step in the conversion of 2-oxoglutarate to succinyl-CoA and CO(2). The protein is 2-oxoglutarate dehydrogenase E1 component (sucA) of Haemophilus influenzae (strain ATCC 51907 / DSM 11121 / KW20 / Rd).